The sequence spans 439 residues: GTPase Der (439 aa).

EngA-type G domains lie at proline 2–glycine 167 and isoleucine 182–histidine 358. GTP-binding positions include glycine 8–serine 15, aspartate 55–isoleucine 59, asparagine 118–glutamate 121, glycine 188–serine 195, aspartate 235–leucine 239, and asparagine 301–aspartate 304. A KH-like domain is found at tyrosine 359–histidine 439.

The protein belongs to the TRAFAC class TrmE-Era-EngA-EngB-Septin-like GTPase superfamily. EngA (Der) GTPase family. As to quaternary structure, associates with the 50S ribosomal subunit.

Its function is as follows. GTPase that plays an essential role in the late steps of ribosome biogenesis. This is GTPase Der from Thermosipho africanus (strain TCF52B).